The following is an 83-amino-acid chain: RNA-binding protein Hfq (83 aa).

The 60-residue stretch at 10–69 (DPFLNALRREHVPVSIYLVNGIKLQGQIESFDQYVVLLRNTVTQMVYKHAISTIVPGRAV) folds into the Sm domain.

The protein belongs to the Hfq family. As to quaternary structure, homohexamer.

Functionally, RNA chaperone that binds small regulatory RNA (sRNAs) and mRNAs to facilitate mRNA translational regulation in response to envelope stress, environmental stress and changes in metabolite concentrations. Also binds with high specificity to tRNAs. The protein is RNA-binding protein Hfq of Delftia acidovorans (strain DSM 14801 / SPH-1).